The chain runs to 55 residues: Large ribosomal subunit protein eL40 (55 aa).

It belongs to the eukaryotic ribosomal protein eL40 family.

This chain is Large ribosomal subunit protein eL40, found in Ignicoccus hospitalis (strain KIN4/I / DSM 18386 / JCM 14125).